Reading from the N-terminus, the 352-residue chain is Biotin synthase (352 aa).

The Radical SAM core domain occupies 44-262 (NRVQVSTLLS…LAVARIMMPK (219 aa)). 3 residues coordinate [4Fe-4S] cluster: Cys-59, Cys-63, and Cys-66. [2Fe-2S] cluster contacts are provided by Cys-103, Cys-134, Cys-194, and Arg-266.

It belongs to the radical SAM superfamily. Biotin synthase family. In terms of assembly, homodimer. [4Fe-4S] cluster serves as cofactor. It depends on [2Fe-2S] cluster as a cofactor.

It carries out the reaction (4R,5S)-dethiobiotin + (sulfur carrier)-SH + 2 reduced [2Fe-2S]-[ferredoxin] + 2 S-adenosyl-L-methionine = (sulfur carrier)-H + biotin + 2 5'-deoxyadenosine + 2 L-methionine + 2 oxidized [2Fe-2S]-[ferredoxin]. It functions in the pathway cofactor biosynthesis; biotin biosynthesis; biotin from 7,8-diaminononanoate: step 2/2. In terms of biological role, catalyzes the conversion of dethiobiotin (DTB) to biotin by the insertion of a sulfur atom into dethiobiotin via a radical-based mechanism. The sequence is that of Biotin synthase from Pseudomonas paraeruginosa (strain DSM 24068 / PA7) (Pseudomonas aeruginosa (strain PA7)).